A 122-amino-acid chain; its full sequence is Large ribosomal subunit protein eL31 (122 aa).

The protein belongs to the eukaryotic ribosomal protein eL31 family.

This Caenorhabditis elegans protein is Large ribosomal subunit protein eL31.